The chain runs to 624 residues: DNA mismatch repair protein MutL (624 aa).

The interval 355–377 (EESAPERKLPEKTPEPSYSPMKL) is disordered. The segment covering 358–368 (APERKLPEKTP) has biased composition (basic and acidic residues).

The protein belongs to the DNA mismatch repair MutL/HexB family.

Its function is as follows. This protein is involved in the repair of mismatches in DNA. It is required for dam-dependent methyl-directed DNA mismatch repair. May act as a 'molecular matchmaker', a protein that promotes the formation of a stable complex between two or more DNA-binding proteins in an ATP-dependent manner without itself being part of a final effector complex. This Bacillus velezensis (strain DSM 23117 / BGSC 10A6 / LMG 26770 / FZB42) (Bacillus amyloliquefaciens subsp. plantarum) protein is DNA mismatch repair protein MutL.